Consider the following 683-residue polypeptide: Methionine--tRNA ligase (683 aa).

The 'HIGH' region motif lies at 15 to 25 (PYANGSIHLGH). The Zn(2+) site is built by C146, C149, C159, and C162. Positions 332-336 (KMSKS) match the 'KMSKS' region motif. K335 is a binding site for ATP. Residues 582 to 683 (DFAKVDLRIA…QGAQAGMRVM (102 aa)) enclose the tRNA-binding domain.

The protein belongs to the class-I aminoacyl-tRNA synthetase family. MetG type 1 subfamily. In terms of assembly, homodimer. Zn(2+) is required as a cofactor.

It localises to the cytoplasm. The enzyme catalyses tRNA(Met) + L-methionine + ATP = L-methionyl-tRNA(Met) + AMP + diphosphate. Functionally, is required not only for elongation of protein synthesis but also for the initiation of all mRNA translation through initiator tRNA(fMet) aminoacylation. The polypeptide is Methionine--tRNA ligase (Vibrio cholerae serotype O1 (strain ATCC 39315 / El Tor Inaba N16961)).